A 112-amino-acid polypeptide reads, in one-letter code: Putative pterin-4-alpha-carbinolamine dehydratase (112 aa).

It belongs to the pterin-4-alpha-carbinolamine dehydratase family.

The catalysed reaction is (4aS,6R)-4a-hydroxy-L-erythro-5,6,7,8-tetrahydrobiopterin = (6R)-L-erythro-6,7-dihydrobiopterin + H2O. This chain is Putative pterin-4-alpha-carbinolamine dehydratase, found in Shewanella amazonensis (strain ATCC BAA-1098 / SB2B).